The chain runs to 92 residues: Acylphosphatase (92 aa).

One can recognise an Acylphosphatase-like domain in the interval R3–R90. Active-site residues include R18 and N36.

Belongs to the acylphosphatase family.

It catalyses the reaction an acyl phosphate + H2O = a carboxylate + phosphate + H(+). This is Acylphosphatase (acyP) from Methylococcus capsulatus (strain ATCC 33009 / NCIMB 11132 / Bath).